Here is a 43-residue protein sequence, read N- to C-terminus: uncharacterized protein (43 aa).

This sequence belongs to the ELIP/psbS family.

The protein resides in the plastid. Its subcellular location is the chloroplast. Functionally, possible role in chlorophyll and/or carotenoid binding. This is an uncharacterized protein from Cyanidium caldarium (Red alga).